An 86-amino-acid polypeptide reads, in one-letter code: Acyl carrier protein (86 aa).

The region spanning 10–85 is the Carrier domain; sequence DKIEQKVIEM…DVIQYIKERQ (76 aa). An O-(pantetheine 4'-phosphoryl)serine modification is found at Ser-45.

It belongs to the acyl carrier protein (ACP) family. 4'-phosphopantetheine is transferred from CoA to a specific serine of apo-ACP by AcpS. This modification is essential for activity because fatty acids are bound in thioester linkage to the sulfhydryl of the prosthetic group.

Its subcellular location is the cytoplasm. The protein operates within lipid metabolism; fatty acid biosynthesis. Carrier of the growing fatty acid chain in fatty acid biosynthesis. In Rickettsia canadensis (strain McKiel), this protein is Acyl carrier protein.